A 428-amino-acid polypeptide reads, in one-letter code: Putative zinc metalloprotease SA1105 (428 aa).

Histidine 21 lines the Zn(2+) pocket. Glutamate 22 is an active-site residue. Histidine 25 lines the Zn(2+) pocket. The next 4 membrane-spanning stretches (helical) occupy residues 172–194 (FLTL…IGLA), 309–331 (GSTL…GFSF), 352–374 (IISL…LIPI), and 401–420 (TTII…LVTW). The 84-residue stretch at 186 to 269 (ALVLFIGLAY…TKSVELTPKK (84 aa)) folds into the PDZ domain.

It belongs to the peptidase M50B family. Requires Zn(2+) as cofactor.

It localises to the cell membrane. The sequence is that of Putative zinc metalloprotease SA1105 from Staphylococcus aureus (strain N315).